The following is a 70-amino-acid chain: U-actitoxin-Ael2c (70 aa).

Residues 1–21 (SYQRFLFLVVVASLIATSLAI) form the signal peptide. Positions 22-26 (PKDLE) are excised as a propeptide. 3 disulfide bridges follow: cysteine 32–cysteine 65, cysteine 34–cysteine 58, and cysteine 48–cysteine 66.

Belongs to the sea anemone type 3 (BDS) potassium channel toxin family.

Its subcellular location is the secreted. The protein localises to the nematocyst. Functionally, potently and selectively inhibits voltage-gated potassium channels Kv11/KCNH/ERG. Acts as a gating-modifier toxin that shifts the voltage-dependence of ERG activation in the positive direction and suppresses its current amplitudes elicited by strong depolarizing pulses that maximally activate the channels. The sequence is that of U-actitoxin-Ael2c from Anthopleura elegantissima (Green aggregating anemone).